The sequence spans 79 residues: Cell division protein ZapB (79 aa).

Positions glutamate 4–glutamate 78 form a coiled coil.

It belongs to the ZapB family. In terms of assembly, homodimer. The ends of the coiled-coil dimer bind to each other, forming polymers. Interacts with FtsZ.

It localises to the cytoplasm. In terms of biological role, non-essential, abundant cell division factor that is required for proper Z-ring formation. It is recruited early to the divisome by direct interaction with FtsZ, stimulating Z-ring assembly and thereby promoting cell division earlier in the cell cycle. Its recruitment to the Z-ring requires functional FtsA or ZipA. This chain is Cell division protein ZapB, found in Pectobacterium carotovorum subsp. carotovorum (strain PC1).